Here is a 94-residue protein sequence, read N- to C-terminus: Putative septation protein SpoVG (94 aa).

The protein belongs to the SpoVG family.

In terms of biological role, could be involved in septation. The chain is Putative septation protein SpoVG from Acetivibrio thermocellus (strain ATCC 27405 / DSM 1237 / JCM 9322 / NBRC 103400 / NCIMB 10682 / NRRL B-4536 / VPI 7372) (Clostridium thermocellum).